The sequence spans 269 residues: Protein CURLY FLAG LEAF 1 (269 aa).

Positions 17-44 (SLNGGGGGGGGRRRGRRAAAAEGSDDSE) are disordered. The short motif at 47–52 (TVELNS) is the EAR element. The WW domain occupies 54–88 (VALPYHWEQCLDIRTGQVYYINWEDGTRTTIDPRS). Disordered regions lie at residues 83–133 (TIDP…SGYT) and 174–218 (GDDE…SGAG). Composition is skewed to low complexity over residues 87–106 (RSSS…SSSR), 121–133 (AAAA…SGYT), and 180–202 (SSSS…AVSS). Positions 203 to 212 (TLSSFSPTDE) are enriched in polar residues.

In terms of assembly, binds to HDG1.

Its function is as follows. Negatively regulates the cuticle development probably by interacting with the HD-ZIP IV transcription factor HDG1. This Oryza sativa subsp. indica (Rice) protein is Protein CURLY FLAG LEAF 1.